A 512-amino-acid polypeptide reads, in one-letter code: Solute carrier family 2, facilitated glucose transporter member 7 (512 aa).

Topologically, residues 1 to 21 (MENKEAGTPPPIPSREGRLQP) are cytoplasmic. The helical transmembrane segment at 22 to 42 (TLLLATLSAAFGSAFQYGYNL) threads the bilayer. Residues 43–78 (SVVNTPHKVFKSFYNETYFERHATFMDGKLMLLLWS) are Extracellular-facing. N57 is a glycosylation site (N-linked (GlcNAc...) asparagine). A helical membrane pass occupies residues 79 to 99 (CTVSMFPLGGLLGSLLVGLLV). The Cytoplasmic portion of the chain corresponds to 100–107 (DSCGRKGT). Residues 108 to 128 (LLINNIFAIIPAILMGVSKVA) traverse the membrane as a helical segment. Residues 129–138 (KAFELIVFSR) are Extracellular-facing. Residues 139–159 (VVLGVCAGISYSALPMYLGEL) form a helical membrane-spanning segment. The Cytoplasmic portion of the chain corresponds to 160-172 (APKNLRGMVGTMT). The helical transmembrane segment at 173–193 (EVFVIVGVFLAQIFSLQAILG) threads the bilayer. The Extracellular portion of the chain corresponds to 194-198 (NPAGW). A helical transmembrane segment spans residues 199–219 (PVLLALTGVPALLQLLTLPFF). Over 220–281 (PESPRYSLIQ…LHLCALRSLR (62 aa)) the chain is Cytoplasmic. A helical transmembrane segment spans residues 282 to 302 (WQLLSIIVLMAGQQLSGINAI). D-glucose-binding positions include 294–295 (QQ) and N300. At 303–321 (NYYADTIYTSAGVEAAHSQ) the chain is on the extracellular side. A helical transmembrane segment spans residues 322–342 (YVTVGSGVVNIVMTITSAVLV). Residue N331 participates in D-glucose binding. Residues 343-350 (ERLGRRHL) are Cytoplasmic-facing. The helical transmembrane segment at 351–371 (LLAGYGICGSACLVLTVVLLF) threads the bilayer. At 372–379 (QNRVPELS) the chain is on the extracellular side. A helical transmembrane segment spans residues 380–400 (YLGIICVFAYIAGHSIGPSPV). Residues 401 to 415 (PSVVRTEIFLQSSRR) lie on the Cytoplasmic side of the membrane. The helical transmembrane segment at 416–436 (AAFMVDGAVHWLTNFIIGFLF) threads the bilayer. Residues 437–445 (PSIQEAIGA) lie on the Extracellular side of the membrane. A helical membrane pass occupies residues 446-466 (YSFIIFAGICLLTAIYIYVVI). Residues 467–512 (PETKGKTFVEINRIFAKRNRVKLPEEKEETIDAGPPTASPAKETSF) are Cytoplasmic-facing. Positions 491–512 (EEKEETIDAGPPTASPAKETSF) are disordered.

It belongs to the major facilitator superfamily. Sugar transporter (TC 2.A.1.1) family. Glucose transporter subfamily. As to expression, expressed in small intestine and colon. Weakly expressed in testis and prostate.

The protein resides in the cell membrane. Its subcellular location is the apical cell membrane. It carries out the reaction D-glucose(out) = D-glucose(in). It catalyses the reaction D-fructose(out) = D-fructose(in). Its activity is regulated as follows. Glucose and fructose transport are inhibited by the flavonoid apigenin. In terms of biological role, probable sugar transporter. Even if its physiological substrate is subject to discussion, it is able to transport glucose and fructose. Does not transport galactose, 2-deoxy-d-glucose and xylose. In Homo sapiens (Human), this protein is Solute carrier family 2, facilitated glucose transporter member 7.